The sequence spans 412 residues: Squamosa promoter-binding-like protein 2 (412 aa).

Residues M1–A81 form a disordered region. The segment covering P18–A31 has biased composition (gly residues). 2 stretches are compositionally biased toward low complexity: residues V48–A57 and S67–A81. An SBP-type zinc finger spans residues V89–P167. Residues C92, C97, C115, H118, C134, C137, H141, and C153 each contribute to the Zn(2+) site. The Bipartite nuclear localization signal motif lies at K150–K166.

Expressed in stems, leaf sheaths, and young panicles.

The protein localises to the nucleus. Trans-acting factor that binds specifically to the consensus nucleotide sequence 5'-TNCGTACAA-3'. May be involved in panicle development. This is Squamosa promoter-binding-like protein 2 (SPL2) from Oryza sativa subsp. japonica (Rice).